Reading from the N-terminus, the 460-residue chain is Bifunctional protein GlmU (460 aa).

Positions 1 to 229 (MSHYAIILAA…FEESLGVNDR (229 aa)) are pyrophosphorylase. Residues 8–11 (LAAG), Lys-22, Gln-72, and 77–78 (GT) each bind UDP-N-acetyl-alpha-D-glucosamine. Asp-102 provides a ligand contact to Mg(2+). UDP-N-acetyl-alpha-D-glucosamine-binding residues include Gly-139, Glu-154, Asn-169, and Asn-227. Asn-227 is a binding site for Mg(2+). A linker region spans residues 230-250 (VALATAEDVMRRRINKAHMIN). An N-acetyltransferase region spans residues 251 to 460 (GVTFQNPNAT…KKPHHPSQQK (210 aa)). Positions 332 and 350 each coordinate UDP-N-acetyl-alpha-D-glucosamine. Residue His-362 is the Proton acceptor of the active site. Positions 365 and 376 each coordinate UDP-N-acetyl-alpha-D-glucosamine. Acetyl-CoA-binding positions include Ala-379, 385–386 (NY), Ser-404, Ala-422, and Arg-439.

This sequence in the N-terminal section; belongs to the N-acetylglucosamine-1-phosphate uridyltransferase family. In the C-terminal section; belongs to the transferase hexapeptide repeat family. In terms of assembly, homotrimer. It depends on Mg(2+) as a cofactor.

The protein resides in the cytoplasm. It carries out the reaction alpha-D-glucosamine 1-phosphate + acetyl-CoA = N-acetyl-alpha-D-glucosamine 1-phosphate + CoA + H(+). The catalysed reaction is N-acetyl-alpha-D-glucosamine 1-phosphate + UTP + H(+) = UDP-N-acetyl-alpha-D-glucosamine + diphosphate. It functions in the pathway nucleotide-sugar biosynthesis; UDP-N-acetyl-alpha-D-glucosamine biosynthesis; N-acetyl-alpha-D-glucosamine 1-phosphate from alpha-D-glucosamine 6-phosphate (route II): step 2/2. Its pathway is nucleotide-sugar biosynthesis; UDP-N-acetyl-alpha-D-glucosamine biosynthesis; UDP-N-acetyl-alpha-D-glucosamine from N-acetyl-alpha-D-glucosamine 1-phosphate: step 1/1. It participates in bacterial outer membrane biogenesis; LPS lipid A biosynthesis. Catalyzes the last two sequential reactions in the de novo biosynthetic pathway for UDP-N-acetylglucosamine (UDP-GlcNAc). The C-terminal domain catalyzes the transfer of acetyl group from acetyl coenzyme A to glucosamine-1-phosphate (GlcN-1-P) to produce N-acetylglucosamine-1-phosphate (GlcNAc-1-P), which is converted into UDP-GlcNAc by the transfer of uridine 5-monophosphate (from uridine 5-triphosphate), a reaction catalyzed by the N-terminal domain. The sequence is that of Bifunctional protein GlmU from Streptococcus thermophilus (strain CNRZ 1066).